Reading from the N-terminus, the 188-residue chain is GMP synthase [glutamine-hydrolyzing] subunit A (188 aa).

One can recognise a Glutamine amidotransferase type-1 domain in the interval 2–188 (KIAVIYFGGQ…FKNFIEACKK (187 aa)). The Nucleophile role is filled by C79. Active-site residues include H166 and E168.

Heterodimer composed of a glutamine amidotransferase subunit (A) and a GMP-binding subunit (B).

It catalyses the reaction XMP + L-glutamine + ATP + H2O = GMP + L-glutamate + AMP + diphosphate + 2 H(+). The protein operates within purine metabolism; GMP biosynthesis; GMP from XMP (L-Gln route): step 1/1. In terms of biological role, catalyzes the synthesis of GMP from XMP. The sequence is that of GMP synthase [glutamine-hydrolyzing] subunit A from Sulfurisphaera tokodaii (strain DSM 16993 / JCM 10545 / NBRC 100140 / 7) (Sulfolobus tokodaii).